A 416-amino-acid chain; its full sequence is Serine hydroxymethyltransferase (416 aa).

(6S)-5,6,7,8-tetrahydrofolate is bound by residues Leu121 and 125-127 (GHL). Lys229 is subject to N6-(pyridoxal phosphate)lysine.

It belongs to the SHMT family. As to quaternary structure, homodimer. Requires pyridoxal 5'-phosphate as cofactor.

It is found in the cytoplasm. The catalysed reaction is (6R)-5,10-methylene-5,6,7,8-tetrahydrofolate + glycine + H2O = (6S)-5,6,7,8-tetrahydrofolate + L-serine. It functions in the pathway one-carbon metabolism; tetrahydrofolate interconversion. The protein operates within amino-acid biosynthesis; glycine biosynthesis; glycine from L-serine: step 1/1. Catalyzes the reversible interconversion of serine and glycine with tetrahydrofolate (THF) serving as the one-carbon carrier. This reaction serves as the major source of one-carbon groups required for the biosynthesis of purines, thymidylate, methionine, and other important biomolecules. Also exhibits THF-independent aldolase activity toward beta-hydroxyamino acids, producing glycine and aldehydes, via a retro-aldol mechanism. The protein is Serine hydroxymethyltransferase of Azoarcus sp. (strain BH72).